A 385-amino-acid chain; its full sequence is MGILGLSKLIADLAPQAIRESEMKHFFGRKVAIDASMCLYQFLIAVRSEGAQLATVNGDPTSHLMGMFYRTIRLLDNGIKPVYVFDGKPPDLKSGELAKRAERREEAEKALKAATDAGDDAGIEKFNRRLVRVTKEHAKEAKELLTLMGVPYVDAPCEAEAQCAALVKAGKVYATATEDMDALTFGSTKLLRYLTYSEARKMPVKEFSYDKLLEGLAINNREFIDLCILLGCDYCESIKGIGPKRAIELINTYRDIETILDNLDSSKYTVPENWNYKVARELFIEPEVANADSIDLKWVEPDEEGLVKFLCGDRQFNEERVRNGAKKLMKSKQAQTQVRLDSFFKTLPSTPNATNAAKRKADEAKKSANNKKAKTSGGGRGRRPK.

The tract at residues 1-104 is N-domain; sequence MGILGLSKLI…GELAKRAERR (104 aa). Aspartate 34 lines the Mg(2+) pocket. DNA-binding residues include arginine 47 and arginine 70. Mg(2+)-binding residues include aspartate 86, glutamate 158, glutamate 160, aspartate 179, and aspartate 181. Residues 122–253 form an I-domain region; the sequence is GIEKFNRRLV…KRAIELINTY (132 aa). Glutamate 158 is a binding site for DNA. Residues glycine 231 and aspartate 233 each contribute to the DNA site. Aspartate 233 contributes to the Mg(2+) binding site. The interaction with PCNA stretch occupies residues 336-344; that stretch reads TQVRLDSFF. Residues 346–385 are disordered; it reads TLPSTPNATNAAKRKADEAKKSANNKKAKTSGGGRGRRPK. The segment covering 368–385 has biased composition (basic residues); sequence ANNKKAKTSGGGRGRRPK.

It belongs to the XPG/RAD2 endonuclease family. FEN1 subfamily. Interacts with PCNA. Three molecules of FEN1 bind to one PCNA trimer with each molecule binding to one PCNA monomer. PCNA stimulates the nuclease activity without altering cleavage specificity. Mg(2+) serves as cofactor. Post-translationally, phosphorylated. Phosphorylation upon DNA damage induces relocalization to the nuclear plasma.

The protein localises to the nucleus. It localises to the nucleolus. It is found in the nucleoplasm. Its subcellular location is the mitochondrion. Functionally, structure-specific nuclease with 5'-flap endonuclease and 5'-3' exonuclease activities involved in DNA replication and repair. During DNA replication, cleaves the 5'-overhanging flap structure that is generated by displacement synthesis when DNA polymerase encounters the 5'-end of a downstream Okazaki fragment. It enters the flap from the 5'-end and then tracks to cleave the flap base, leaving a nick for ligation. Also involved in the long patch base excision repair (LP-BER) pathway, by cleaving within the apurinic/apyrimidinic (AP) site-terminated flap. Acts as a genome stabilization factor that prevents flaps from equilibrating into structures that lead to duplications and deletions. Also possesses 5'-3' exonuclease activity on nicked or gapped double-stranded DNA, and exhibits RNase H activity. Also involved in replication and repair of rDNA and in repairing mitochondrial DNA. This chain is Flap endonuclease 1, found in Drosophila sechellia (Fruit fly).